The chain runs to 207 residues: Recombination protein RecR (207 aa).

The C4-type zinc-finger motif lies at 62–77; that stretch reads CSRCNTFTEQDVCETC. The 100-residue stretch at 85–184 folds into the Toprim domain; sequence SVLCVVETPA…KVSRLARGVP (100 aa).

Belongs to the RecR family.

Functionally, may play a role in DNA repair. It seems to be involved in an RecBC-independent recombinational process of DNA repair. It may act with RecF and RecO. This is Recombination protein RecR from Ralstonia nicotianae (strain ATCC BAA-1114 / GMI1000) (Ralstonia solanacearum).